We begin with the raw amino-acid sequence, 241 residues long: Queuine tRNA-ribosyltransferase-like protein (241 aa).

This sequence belongs to the queuine tRNA-ribosyltransferase family.

The polypeptide is Queuine tRNA-ribosyltransferase-like protein (Plasmodium falciparum).